The chain runs to 220 residues: Probable transcriptional regulator NRG2 (220 aa).

C2H2-type zinc fingers lie at residues 153 to 175 (HFCK…NRIH) and 181 to 205 (HICP…YRTH).

It localises to the nucleus. In terms of biological role, transcriptional repressor. This chain is Probable transcriptional regulator NRG2 (NRG2), found in Saccharomyces cerevisiae (strain ATCC 204508 / S288c) (Baker's yeast).